A 471-amino-acid chain; its full sequence is Cell division protein FtsP (471 aa).

The segment at residues 1-27 (MSLSRRSFLQASGVALAAGALPLKAEA) is a signal peptide (tat-type signal). A Plastocyanin-like domain is found at 229-288 (VRLRLLNASNARRYELSMTDNRAFHVVASDLGFLPAPMTVKRLSLGPGERREVLVDMSQG).

The protein belongs to the FtsP family. In terms of processing, predicted to be exported by the Tat system. The position of the signal peptide cleavage has not been experimentally proven.

The protein localises to the periplasm. In terms of biological role, cell division protein that is required for growth during stress conditions. May be involved in protecting or stabilizing the divisomal assembly under conditions of stress. The sequence is that of Cell division protein FtsP from Rahnella sp. (strain Y9602).